The following is a 268-amino-acid chain: Tryptophan synthase alpha chain (268 aa).

Catalysis depends on proton acceptor residues Glu49 and Asp60.

Belongs to the TrpA family. As to quaternary structure, tetramer of two alpha and two beta chains.

It carries out the reaction (1S,2R)-1-C-(indol-3-yl)glycerol 3-phosphate + L-serine = D-glyceraldehyde 3-phosphate + L-tryptophan + H2O. Its pathway is amino-acid biosynthesis; L-tryptophan biosynthesis; L-tryptophan from chorismate: step 5/5. Its function is as follows. The alpha subunit is responsible for the aldol cleavage of indoleglycerol phosphate to indole and glyceraldehyde 3-phosphate. This Vibrio metschnikovii protein is Tryptophan synthase alpha chain.